The following is a 213-amino-acid chain: GTP cyclohydrolase 1 (213 aa).

C104, H107, and C175 together coordinate Zn(2+).

It belongs to the GTP cyclohydrolase I family. Toroid-shaped homodecamer, composed of two pentamers of five dimers.

It carries out the reaction GTP + H2O = 7,8-dihydroneopterin 3'-triphosphate + formate + H(+). It functions in the pathway cofactor biosynthesis; 7,8-dihydroneopterin triphosphate biosynthesis; 7,8-dihydroneopterin triphosphate from GTP: step 1/1. The sequence is that of GTP cyclohydrolase 1 from Brucella abortus (strain 2308).